Consider the following 683-residue polypeptide: MSTNSRQILVTCALPYANGPIHLGHMLEHIQADIWVRFQRMRGNEIYFVCADDAHGTPIMLKADQMGVKPEQLIADVQQKHMADFSGFNISFDNYHSTHSDENRELVEAIYHKLKQNGFIKTRIISQLFDPEKAMFLPDRFVKGTCPKCKAEDQYGDNCEVCSATYSPIELISPRSTVSGATPVLKESEHFFFDLPAFESMLTEWIRSGSLQQEVANKMQEWFEAGLQQWDISRDAPYFGFKIPNTDNKYFYVWLDAPIGYMASFKNLCGKKSGIDFDSFWSKESHAELYHFIGKDIMYFHSLFWPAMLDGASLRKPNNIFVHGYVTVNGEKMSKSRGTFIQAATYLKYLDPECLRYYYAAKLGSRIDDLDLNLDDFVQRVNTDLVNKLVNLASRNASFIQKRFDGKLADKLDDKMLFDEFIAQSELIADYYENREFGKAIREIMALTDKANKYVDEKAPWVIAKDESRTDELQQVCSMGIELFRVLIGYLKPVLPNLAARAEAFLNTQLTWENVASPLLDHQIAPFKPLFSRLDMKKIEEMIEASKIENAKANQTAGKSAVENKAFSEFEPIEESITIDDFFKVDLRVAKVLKCEAVPESNKLLKFILDIGNETRQVFSGIKAAYGKPEDLEGRFVIMVANLAPRKMKFGMSEGMILSAGNGGADLYLLDVDAGAKAGQRVK.

Residues 15-25 (PYANGPIHLGH) carry the 'HIGH' region motif. Residues Cys-146, Cys-149, Cys-159, and Cys-162 each coordinate Zn(2+). The short motif at 332–336 (KMSKS) is the 'KMSKS' region element. An ATP-binding site is contributed by Lys-335. One can recognise a tRNA-binding domain in the interval 581–683 (DFFKVDLRVA…AGAKAGQRVK (103 aa)).

This sequence belongs to the class-I aminoacyl-tRNA synthetase family. MetG type 1 subfamily. In terms of assembly, homodimer. Zn(2+) serves as cofactor.

Its subcellular location is the cytoplasm. The enzyme catalyses tRNA(Met) + L-methionine + ATP = L-methionyl-tRNA(Met) + AMP + diphosphate. Is required not only for elongation of protein synthesis but also for the initiation of all mRNA translation through initiator tRNA(fMet) aminoacylation. This is Methionine--tRNA ligase from Histophilus somni (strain 129Pt) (Haemophilus somnus).